The following is a 316-amino-acid chain: Bifunctional peptidase and (3S)-lysyl hydroxylase JMJD7 (316 aa).

Cys-19 bears the Cysteine sulfenic acid (-SOH) mark. Residues Tyr-123 and Thr-172 each contribute to the 2-oxoglutarate site. Tyr-123 lines the succinate pocket. Residues 124 to 310 (IQKQNSNLSV…YCYYRMLEQM (187 aa)) form the JmjC domain. Positions 175 and 177 each coordinate Fe cation. 3 residues coordinate 2-oxoglutarate: Asn-181, Tyr-183, and Lys-190. Tyr-183 and Lys-190 together coordinate succinate. His-278 contributes to the Fe cation binding site. Trp-292 is a binding site for 2-oxoglutarate.

Homodimer; disulfide-linked. Fe(2+) serves as cofactor. Expressed in the pars intercerebralis and fan-shaped body, regions known to be involved in sleep.

It localises to the nucleus. It is found in the cytoplasm. The enzyme catalyses L-lysyl-[protein] + 2-oxoglutarate + O2 = (3S)-3-hydroxy-L-lysyl-[protein] + succinate + CO2. In terms of biological role, bifunctional enzyme that acts both as an endopeptidase and 2-oxoglutarate-dependent monooxygenase. Endopeptidase that cleaves histones N-terminal tails at the carboxyl side of methylated arginine or lysine residues, to generate 'tailless nucleosomes', which may trigger transcription elongation. Hydroxylates the guanylate binding protein 128up. May be involved in regulation of behavior and circadian rhythms. This Drosophila melanogaster (Fruit fly) protein is Bifunctional peptidase and (3S)-lysyl hydroxylase JMJD7.